The chain runs to 59 residues: Large ribosomal subunit protein uL30 (59 aa).

Belongs to the universal ribosomal protein uL30 family. Part of the 50S ribosomal subunit.

This Bacillus licheniformis (strain ATCC 14580 / DSM 13 / JCM 2505 / CCUG 7422 / NBRC 12200 / NCIMB 9375 / NCTC 10341 / NRRL NRS-1264 / Gibson 46) protein is Large ribosomal subunit protein uL30.